Consider the following 421-residue polypeptide: Probable dual-specificity RNA methyltransferase RlmN (421 aa).

The segment at 1-23 is disordered; it reads MTATTAESGRPDQPPTAEAGRPV. Glu127 serves as the catalytic Proton acceptor. The Radical SAM core domain occupies 133 to 372; sequence YPDRATVCVS…VTTVRDTRGR (240 aa). An intrachain disulfide couples Cys140 to Cys378. 3 residues coordinate [4Fe-4S] cluster: Cys147, Cys151, and Cys154. Residues 202–203, Ser236, 259–261, and Asn335 each bind S-adenosyl-L-methionine; these read GE and SLH. Residue Cys378 is the S-methylcysteine intermediate of the active site. Positions 383–421 are disordered; it reads AEPAGKPERTDRPEQVGSDRLVEFGAVGSTTPDGDRVLR. The segment covering 387–396 has biased composition (basic and acidic residues); it reads GKPERTDRPE.

The protein belongs to the radical SAM superfamily. RlmN family. The cofactor is [4Fe-4S] cluster.

Its subcellular location is the cytoplasm. The enzyme catalyses adenosine(2503) in 23S rRNA + 2 reduced [2Fe-2S]-[ferredoxin] + 2 S-adenosyl-L-methionine = 2-methyladenosine(2503) in 23S rRNA + 5'-deoxyadenosine + L-methionine + 2 oxidized [2Fe-2S]-[ferredoxin] + S-adenosyl-L-homocysteine. It carries out the reaction adenosine(37) in tRNA + 2 reduced [2Fe-2S]-[ferredoxin] + 2 S-adenosyl-L-methionine = 2-methyladenosine(37) in tRNA + 5'-deoxyadenosine + L-methionine + 2 oxidized [2Fe-2S]-[ferredoxin] + S-adenosyl-L-homocysteine. Its function is as follows. Specifically methylates position 2 of adenine 2503 in 23S rRNA and position 2 of adenine 37 in tRNAs. The chain is Probable dual-specificity RNA methyltransferase RlmN from Frankia casuarinae (strain DSM 45818 / CECT 9043 / HFP020203 / CcI3).